The primary structure comprises 206 residues: Protein sym1 (206 aa).

A run of 2 helical transmembrane segments spans residues 107–127 and 169–189; these read VLLDQAVFAPFGTAFFFSWMT and LQYQMPFACTVAIFWNIFLSL.

Belongs to the peroxisomal membrane protein PXMP2/4 family.

It localises to the mitochondrion inner membrane. In Schizosaccharomyces pombe (strain 972 / ATCC 24843) (Fission yeast), this protein is Protein sym1 (sym1).